Consider the following 396-residue polypeptide: Jacalin-related lectin 45 (396 aa).

3 consecutive Jacalin-type lectin domains span residues 3 to 138 (KKVT…KTSH), 144 to 264 (QFRM…NFAV), and 270 to 392 (VKKL…YVKP).

This sequence belongs to the jacalin lectin family.

The protein is Jacalin-related lectin 45 (JAL45) of Arabidopsis thaliana (Mouse-ear cress).